A 1049-amino-acid polypeptide reads, in one-letter code: FERM, ARHGEF and pleckstrin domain-containing protein 1 (1049 aa).

The disordered stretch occupies residues 1–37; it reads MGEIEQKPTPASRLGAPENSGISTLERGQKPPPTPSG. 2 positions are modified to phosphoserine: serine 20 and serine 23. Threonine 24 is subject to Phosphothreonine. The 281-residue stretch at 40 to 320 folds into the FERM domain; sequence MTVKIQMLDD…EHHAFFRLFE (281 aa). Phosphoserine occurs at positions 340, 373, 389, 403, 427, 433, and 437. The tract at residues 361–537 is disordered; that stretch reads FERKHSKIHS…TDDEEEGRRK (177 aa). 2 stretches are compositionally biased toward polar residues: residues 371–395 and 402–412; these read TRSLVSQPTAPNSEVPKQSPQSASL and ESPSAQSCQQA. Over residues 435-448 the composition is skewed to low complexity; the sequence is SGSKAADGTAAAAP. 2 stretches are compositionally biased toward polar residues: residues 473 to 492 and 499 to 514; these read STGSLTGSPHLSELSINSQG and VTLSPNLSPDNKQASP. Serine 513 and serine 517 each carry phosphoserine. The region spanning 543 to 734 is the DH domain; sequence KAYYIAKEVS…TEMVAQLHGT (192 aa). Positions 763–860 constitute a PH 1 domain; it reads EFIRLGSLSK…WLEDIQMAID (98 aa). A phosphoserine mark is found at serine 837, serine 876, and serine 882. The interval 866–908 is disordered; sequence NGPTPELLASSPPDNKSPDEATAADQESEDDLSASRTSLERQA. A Phosphothreonine modification is found at threonine 887. Residues serine 893, serine 900, and serine 903 each carry the phosphoserine modification. Residues 936-1033 form the PH 2 domain; that stretch reads ENQLSGNLLR…WMEVIRSATS (98 aa).

As to quaternary structure, interacts with CADM1. Interacts with RAC1. In terms of tissue distribution, detected in forbrain (at protein level).

It localises to the cell membrane. The protein localises to the synapse. Its subcellular location is the synaptosome. It is found in the cytoplasm. The protein resides in the cytosol. It localises to the cell projection. The protein localises to the filopodium. Its subcellular location is the dendrite. It is found in the dendritic spine. In terms of biological role, may play a role in semaphorin signaling. Functions as a guanine nucleotide exchange factor for RAC1. Plays a role in the assembly and disassembly of dendritic filopodia, the formation of dendritic spines, regulation of dendrite length and ultimately the formation of synapses. The sequence is that of FERM, ARHGEF and pleckstrin domain-containing protein 1 (Farp1) from Rattus norvegicus (Rat).